The primary structure comprises 284 residues: Undecaprenyl-diphosphatase (284 aa).

The next 8 membrane-spanning stretches (helical) occupy residues 7 to 27 (IILG…TGHL), 44 to 64 (EMFD…LYFH), 90 to 110 (LWLK…PLND), 116 to 136 (FYHF…FIVI), 167 to 187 (VLSL…ALLI), 197 to 217 (FTFF…ILHF), 229 to 249 (FGVL…AIKF), and 259 to 279 (FTFF…YAAF).

The protein belongs to the UppP family.

The protein localises to the cell membrane. It carries out the reaction di-trans,octa-cis-undecaprenyl diphosphate + H2O = di-trans,octa-cis-undecaprenyl phosphate + phosphate + H(+). In terms of biological role, catalyzes the dephosphorylation of undecaprenyl diphosphate (UPP). Confers resistance to bacitracin. This is Undecaprenyl-diphosphatase from Lactococcus lactis subsp. cremoris (strain MG1363).